Here is a 172-residue protein sequence, read N- to C-terminus: Large ribosomal subunit protein uL10 (172 aa).

It belongs to the universal ribosomal protein uL10 family. As to quaternary structure, part of the ribosomal stalk of the 50S ribosomal subunit. The N-terminus interacts with L11 and the large rRNA to form the base of the stalk. The C-terminus forms an elongated spine to which L12 dimers bind in a sequential fashion forming a multimeric L10(L12)X complex.

In terms of biological role, forms part of the ribosomal stalk, playing a central role in the interaction of the ribosome with GTP-bound translation factors. In Rhizobium meliloti (strain 1021) (Ensifer meliloti), this protein is Large ribosomal subunit protein uL10.